Here is a 310-residue protein sequence, read N- to C-terminus: Glutaminase (310 aa).

Substrate-binding residues include serine 67, asparagine 118, glutamate 161, asparagine 168, tyrosine 192, tyrosine 244, and valine 262.

It belongs to the glutaminase family. In terms of assembly, homotetramer.

It carries out the reaction L-glutamine + H2O = L-glutamate + NH4(+). The polypeptide is Glutaminase (Legionella pneumophila (strain Paris)).